A 104-amino-acid chain; its full sequence is Large ribosomal subunit protein uL24 (104 aa).

The protein belongs to the universal ribosomal protein uL24 family. In terms of assembly, part of the 50S ribosomal subunit.

In terms of biological role, one of two assembly initiator proteins, it binds directly to the 5'-end of the 23S rRNA, where it nucleates assembly of the 50S subunit. One of the proteins that surrounds the polypeptide exit tunnel on the outside of the subunit. This chain is Large ribosomal subunit protein uL24, found in Hydrogenovibrio crunogenus (strain DSM 25203 / XCL-2) (Thiomicrospira crunogena).